The chain runs to 266 residues: Secreted RxLR effector protein 128 (266 aa).

Residues 1–18 (MRGAFYTAIALLIGRSQT) form the signal peptide. The RxLR-dEER signature appears at 48 to 63 (RYLRDGLAHSATNEER).

Belongs to the RxLR effector family.

It is found in the secreted. The protein localises to the host nucleus. In terms of biological role, secreted effector that dos not suppress the host cell death induced by cell death-inducing proteins. In Plasmopara viticola (Downy mildew of grapevine), this protein is Secreted RxLR effector protein 128.